Here is a 150-residue protein sequence, read N- to C-terminus: SsrA-binding protein (150 aa).

It belongs to the SmpB family.

It localises to the cytoplasm. Required for rescue of stalled ribosomes mediated by trans-translation. Binds to transfer-messenger RNA (tmRNA), required for stable association of tmRNA with ribosomes. tmRNA and SmpB together mimic tRNA shape, replacing the anticodon stem-loop with SmpB. tmRNA is encoded by the ssrA gene; the 2 termini fold to resemble tRNA(Ala) and it encodes a 'tag peptide', a short internal open reading frame. During trans-translation Ala-aminoacylated tmRNA acts like a tRNA, entering the A-site of stalled ribosomes, displacing the stalled mRNA. The ribosome then switches to translate the ORF on the tmRNA; the nascent peptide is terminated with the 'tag peptide' encoded by the tmRNA and targeted for degradation. The ribosome is freed to recommence translation, which seems to be the essential function of trans-translation. The sequence is that of SsrA-binding protein from Thermotoga maritima (strain ATCC 43589 / DSM 3109 / JCM 10099 / NBRC 100826 / MSB8).